Reading from the N-terminus, the 156-residue chain is Small ribosomal subunit protein uS7 (156 aa).

This sequence belongs to the universal ribosomal protein uS7 family. Part of the 30S ribosomal subunit. Contacts proteins S9 and S11.

One of the primary rRNA binding proteins, it binds directly to 16S rRNA where it nucleates assembly of the head domain of the 30S subunit. Is located at the subunit interface close to the decoding center, probably blocks exit of the E-site tRNA. The chain is Small ribosomal subunit protein uS7 from Prochlorococcus marinus (strain MIT 9211).